The primary structure comprises 566 residues: MEDSDSAAKQLGLAEAAAVAAAAAVAAAAAAAAESEAEEPVLSRDEDSEEDADSEAERETRRVTAVAVMAAESGHMDMGTEALPSPDEAAAAAAAFAEVTTVTVANVGSSADNVFTTSVANAASISGHVLSGRTALQIGDSLNTEKATLIVVHTDGSIVETTGLKGPAAPLTPGPQSPPTPLAPGQEKGGTKYNWDPSVYDSELPVRCRNISGTLYKSRLGSGGRGRCIKQGENWYSPTEFEAMAGRASSKDWKRSIRYAGRPLQCLIQDGILNPHAASCTCAACCDDMTLSGPVRLFVPYKRRKKENELPTTPVKKDSPKNITLLPATAATTFTVTPSGQITTSGALTFDRASTVEATAVISESPAQGDVFAGATVQEAGVQPPCRVGHPEPHYPGYQDSCQIAPFPEAALPTSHPKIVLTSLPALAVPPSTPTKAVSPTVVSGLEMSEHRSWLYLEEMVNSLLNTAQQLKTLFEQAKQASSCREAAVTQARMQVDTERKEQSCVNCGREAMSECTGCHKVNYCSTFCQRKDWKDHQHVCGQSASVTVQADDVHVEESVIEKVAV.

2 disordered regions span residues 33–62 and 163–191; these read AESE…ETRR and GLKG…KGGT. The segment covering 170 to 182 has biased composition (pro residues); that stretch reads PLTPGPQSPPTPL. Phosphothreonine is present on Thr-172. Ser-177 carries the phosphoserine modification. Thr-180 is subject to Phosphothreonine. The SAND domain maps to 194-274; the sequence is NWDPSVYDSE…QCLIQDGILN (81 aa). A Nuclear localization signal motif is present at residues 300–306; sequence PYKRRKK. An interaction with LMO4 region spans residues 404-479; sequence IAPFPEAALP…QLKTLFEQAK (76 aa). Thr-433 carries the phosphothreonine modification. 2 positions are modified to phosphoserine: Ser-444 and Ser-449. Zn(2+) contacts are provided by Cys-505, Cys-508, Cys-516, Cys-519, Cys-525, Cys-529, His-537, and Cys-541. The MYND-type zinc finger occupies 505-541; it reads CVNCGREAMSECTGCHKVNYCSTFCQRKDWKDHQHVC.

Homodimer. Isoform 1 and isoform 2 may form a heterodimer. May interact with the corepressors NCOR1 and NCRO2. Identified in a complex with XRCC5 and XRCC6. Interacts (via the SAND domain) with the DNA-PK complex subunit XRCC6; the interaction is direct with XRCC6 and may be inhibited by DNA-binding. Interacts with LMO4; LMO4 blocks export from nucleus. Interacts with LMO2 and CLIM2. Post-translationally, may be phosphorylated by DNA-PK complex in a DNA independent manner (in vitro). In terms of tissue distribution, ubiquitously expressed during embryogenesis, with higher expression in regions of the central nervous system, dorsal root ganglia, submandibular gland, epidermis and breast. In 12-week-old NOD mice, expression of isoform 2 is sevenfold higher in lymph node stromal elements than in T-cells and tenfold higher than in B-cells.

The protein localises to the nucleus. It is found in the cytoplasm. Functionally, transcription factor that binds to sequence with multiple copies of 5'-TTC[CG]G-3' present in its own promoter and that of the HNRPA2B1 gene. Down-regulates transcription of these genes. Binds to the retinoic acid response element (RARE) 5'-AGGGTTCACCGAAAGTTCA-3'. Activates the proenkephalin gene independently of promoter binding, probably through protein-protein interaction. Regulates epithelial cell proliferation and side-branching in the mammary gland. Required for neural tube closure and skeletal patterning. Controls the expression of peripheral tissue antigens in pancreatic lymph nodes. Isoform 1 displays greater transcriptional activity than isoform 2. Isoform 2 may inhibit transcriptional activity of isoform 1 by interacting with it and retaining it in the cytoplasm. Transcriptional activator of EIF4G3. May also involved in behavior. This Mus musculus (Mouse) protein is Deformed epidermal autoregulatory factor 1 homolog (Deaf1).